The chain runs to 200 residues: Holliday junction resolvase RecU (200 aa).

The interval 1 to 27 (MALKYPSGKEYRGNKPNAARRPAADYA) is disordered. Thr84, Asp86, Glu99, and Gln118 together coordinate Mg(2+).

It belongs to the RecU family. Homodimer. The cofactor is Mg(2+).

The protein localises to the cytoplasm. It carries out the reaction Endonucleolytic cleavage at a junction such as a reciprocal single-stranded crossover between two homologous DNA duplexes (Holliday junction).. Functionally, endonuclease that resolves Holliday junction intermediates in genetic recombination. Cleaves mobile four-strand junctions by introducing symmetrical nicks in paired strands. Promotes annealing of linear ssDNA with homologous dsDNA. Required for DNA repair, homologous recombination and chromosome segregation. This chain is Holliday junction resolvase RecU, found in Geobacillus kaustophilus (strain HTA426).